The following is a 164-amino-acid chain: Crossover junction endodeoxyribonuclease RuvC (164 aa).

Residues Asp7, Glu66, and Asp138 contribute to the active site. The Mg(2+) site is built by Asp7, Glu66, and Asp138.

The protein belongs to the RuvC family. In terms of assembly, homodimer which binds Holliday junction (HJ) DNA. The HJ becomes 2-fold symmetrical on binding to RuvC with unstacked arms; it has a different conformation from HJ DNA in complex with RuvA. In the full resolvosome a probable DNA-RuvA(4)-RuvB(12)-RuvC(2) complex forms which resolves the HJ. The cofactor is Mg(2+).

It is found in the cytoplasm. The enzyme catalyses Endonucleolytic cleavage at a junction such as a reciprocal single-stranded crossover between two homologous DNA duplexes (Holliday junction).. Functionally, the RuvA-RuvB-RuvC complex processes Holliday junction (HJ) DNA during genetic recombination and DNA repair. Endonuclease that resolves HJ intermediates. Cleaves cruciform DNA by making single-stranded nicks across the HJ at symmetrical positions within the homologous arms, yielding a 5'-phosphate and a 3'-hydroxyl group; requires a central core of homology in the junction. The consensus cleavage sequence is 5'-(A/T)TT(C/G)-3'. Cleavage occurs on the 3'-side of the TT dinucleotide at the point of strand exchange. HJ branch migration catalyzed by RuvA-RuvB allows RuvC to scan DNA until it finds its consensus sequence, where it cleaves and resolves the cruciform DNA. The polypeptide is Crossover junction endodeoxyribonuclease RuvC (Paracoccus denitrificans (strain Pd 1222)).